The primary structure comprises 747 residues: Probable copper-transporting ATPase PacS (747 aa).

Over 1–101 (MVNQQTLTLR…RQLAQRVWVS (101 aa)) the chain is Cytoplasmic. In terms of domain architecture, HMA spans 3-69 (NQQTLTLRGM…AIEAAGYHAF (67 aa)). Cysteine 14 and cysteine 17 together coordinate a metal cation. Residues 102–122 (GLIASLLVIGSLPMMLGISIP) form a helical membrane-spanning segment. Topologically, residues 123–132 (GIPMWLHHPG) are extracellular. A helical transmembrane segment spans residues 133–151 (LQLGLTLPVLWAGRSFFIN). At 152–158 (AWKAFRQ) the chain is on the cytoplasmic side. A helical membrane pass occupies residues 159 to 179 (NTATMDTLVAVGTGAAFLYSL). At 180–199 (AVTLFPQWLTRQGLPPDVYY) the chain is on the extracellular side. The chain crosses the membrane as a helical span at residues 200-220 (EAIAVIIALLLLGRSLEERAK). The Cytoplasmic segment spans residues 221–348 (GQTSAAIRQL…KAPIQRLADQ (128 aa)). A helical membrane pass occupies residues 349 to 371 (VTGWFVPAVIAIAILTFVLWFNW). Residues 372 to 378 (IGNVTLA) are Extracellular-facing. A helical membrane pass occupies residues 379–396 (LITAVGVLIIACPCALGL). Over 397-688 (ATPTSIMVGT…QLSRATMTNI (292 aa)) the chain is Cytoplasmic. Aspartate 434 acts as the 4-aspartylphosphate intermediate in catalysis. Mg(2+) is bound by residues aspartate 634 and aspartate 638. The helical transmembrane segment at 689–708 (RQNLFFAFIYNVAGIPIAAG) threads the bilayer. The Extracellular portion of the chain corresponds to 709–720 (ILYPLLGWLLSP). The helical transmembrane segment at 721 to 739 (MLAGAAMAFSSVSVVTNAL) threads the bilayer. Topologically, residues 740–747 (RLRQFQPR) are cytoplasmic.

It belongs to the cation transport ATPase (P-type) (TC 3.A.3) family. Type IB subfamily.

The protein localises to the cell membrane. The enzyme catalyses Cu(+)(in) + ATP + H2O = Cu(+)(out) + ADP + phosphate + H(+). May play a role in the osmotic adaptation. This chain is Probable copper-transporting ATPase PacS (pacS), found in Synechococcus elongatus (strain ATCC 33912 / PCC 7942 / FACHB-805) (Anacystis nidulans R2).